A 101-amino-acid polypeptide reads, in one-letter code: Small ribosomal subunit protein bS18c (101 aa).

The span at 1 to 19 (MNKSKRPFTKSKRSFRRRL) shows a compositional bias: basic residues. The tract at residues 1–23 (MNKSKRPFTKSKRSFRRRLPPIQ) is disordered.

It belongs to the bacterial ribosomal protein bS18 family. In terms of assembly, part of the 30S ribosomal subunit.

The protein localises to the plastid. The protein resides in the chloroplast. In Draba nemorosa (Woodland whitlowgrass), this protein is Small ribosomal subunit protein bS18c.